A 227-amino-acid chain; its full sequence is Phosphoribosylformylglycinamidine synthase subunit PurQ (227 aa).

The Glutamine amidotransferase type-1 domain maps to 3 to 225 (FAVIVFPGSN…LKYWRETYVV (223 aa)). Cys86 (nucleophile) is an active-site residue. Active-site residues include His194 and Glu196.

Part of the FGAM synthase complex composed of 1 PurL, 1 PurQ and 2 PurS subunits.

The protein resides in the cytoplasm. The catalysed reaction is N(2)-formyl-N(1)-(5-phospho-beta-D-ribosyl)glycinamide + L-glutamine + ATP + H2O = 2-formamido-N(1)-(5-O-phospho-beta-D-ribosyl)acetamidine + L-glutamate + ADP + phosphate + H(+). The enzyme catalyses L-glutamine + H2O = L-glutamate + NH4(+). It participates in purine metabolism; IMP biosynthesis via de novo pathway; 5-amino-1-(5-phospho-D-ribosyl)imidazole from N(2)-formyl-N(1)-(5-phospho-D-ribosyl)glycinamide: step 1/2. Part of the phosphoribosylformylglycinamidine synthase complex involved in the purines biosynthetic pathway. Catalyzes the ATP-dependent conversion of formylglycinamide ribonucleotide (FGAR) and glutamine to yield formylglycinamidine ribonucleotide (FGAM) and glutamate. The FGAM synthase complex is composed of three subunits. PurQ produces an ammonia molecule by converting glutamine to glutamate. PurL transfers the ammonia molecule to FGAR to form FGAM in an ATP-dependent manner. PurS interacts with PurQ and PurL and is thought to assist in the transfer of the ammonia molecule from PurQ to PurL. This Bacillus cytotoxicus (strain DSM 22905 / CIP 110041 / 391-98 / NVH 391-98) protein is Phosphoribosylformylglycinamidine synthase subunit PurQ.